The chain runs to 21 residues: Trypsin (21 aa).

Residues 1–7 (FPIEEDK) constitute a propeptide, activation peptide. The Peptidase S1 domain occupies 8–21 (IVGGYECPKHXVPW).

Belongs to the peptidase S1 family.

It is found in the secreted. The protein resides in the extracellular space. The enzyme catalyses Preferential cleavage: Arg-|-Xaa, Lys-|-Xaa.. The sequence is that of Trypsin from Protopterus aethiopicus (Marbled lungfish).